The chain runs to 676 residues: E3 ubiquitin-protein ligase ICP0 (676 aa).

An RING-type zinc finger spans residues 13–52 (CCICLDAITGAARALPCLHAFCLACIRRWLEGRPTCPLCK). Disordered regions lie at residues 101-153 (DLTA…GGRA), 266-517 (HLIP…AGAQ), and 555-676 (AAIS…AWRQ). The span at 123–153 (EAGGGAGGAEEAGEARGAGAGRAAGAAGGRA) shows a compositional bias: gly residues. The span at 286 to 303 (SDSDSEGSEDDSWSESEE) shows a compositional bias: acidic residues. The span at 304-314 (SSSGLSTSDLT) shows a compositional bias: low complexity. Over residues 315-328 (AIDDTETEPETDAE) the composition is skewed to acidic residues. The span at 351–361 (YVSTRGRQTPA) shows a compositional bias: polar residues. Low complexity-rich tracts occupy residues 375-388 (GRAA…SSRS) and 397-411 (LPAA…QARA). The span at 422 to 439 (GAGLGVAAGETAGWGAGS) shows a compositional bias: gly residues. Residues 440–450 (EEGRGERRARL) are compositionally biased toward basic and acidic residues. Over residues 474–484 (TPAPAPAPAPA) the composition is skewed to pro residues. A compositionally biased stretch (low complexity) spans 555–597 (AAISTRAPTPSPAGRAPAADPRRAGAPALAGAARAEVGRNGNP).

It belongs to the simplexviruses ICp0 family. Auto-ubiquitinated. In terms of processing, transactivation activity is possibly regulated through phosphorylation by casein kinase II.

The enzyme catalyses S-ubiquitinyl-[E2 ubiquitin-conjugating enzyme]-L-cysteine + [acceptor protein]-L-lysine = [E2 ubiquitin-conjugating enzyme]-L-cysteine + N(6)-ubiquitinyl-[acceptor protein]-L-lysine.. In terms of biological role, evades nuclear antiviral defenses triggered by dsDNA viruses. Acts during the initial stages of lytic infection and the reactivation of latent viral genome. Prevents the antiviral effect of nuclear bodies by degrading host PML and SP100. This chain is E3 ubiquitin-protein ligase ICP0 (BICP0), found in Bovine herpesvirus 1.1 (strain Cooper) (BoHV-1).